Reading from the N-terminus, the 171-residue chain is Tetratricopeptide repeat protein 9C (171 aa).

3 TPR repeats span residues 8 to 41, 72 to 107, and 108 to 141; these read AQLY…LRGL, TDCY…QPEN, and AKAL…QPKD.

The protein belongs to the TTC9 family.

This Rattus norvegicus (Rat) protein is Tetratricopeptide repeat protein 9C (Ttc9c).